Consider the following 127-residue polypeptide: Snaclec macrovipecetin subunit beta (127 aa).

3 disulfides stabilise this stretch: C4–C15, C32–C121, and C98–C113. The region spanning 11-122 (YEGHCYKVFD…CSRTYKFVCK (112 aa)) is the C-type lectin domain.

As to quaternary structure, heterodimer of subunits alpha and beta; disulfide-linked. As to expression, expressed by the venom gland.

Its subcellular location is the secreted. Its function is as follows. Interferes with one step of hemostasis (modulation of platelet aggregation, or coagulation cascade, for example). The polypeptide is Snaclec macrovipecetin subunit beta (Macrovipera lebetinus (Levantine viper)).